A 480-amino-acid polypeptide reads, in one-letter code: Cysteine--tRNA ligase (480 aa).

Residue Cys-29 participates in Zn(2+) binding. Positions 31–41 match the 'HIGH' region motif; it reads PTVYGHAHLGH. Residues Cys-221, His-246, and Glu-250 each coordinate Zn(2+). The 'KMSKS' region motif lies at 278-282; the sequence is KMGKS. ATP is bound at residue Lys-281.

It belongs to the class-I aminoacyl-tRNA synthetase family. Monomer. The cofactor is Zn(2+).

The protein localises to the cytoplasm. It catalyses the reaction tRNA(Cys) + L-cysteine + ATP = L-cysteinyl-tRNA(Cys) + AMP + diphosphate. The protein is Cysteine--tRNA ligase of Chlorobium chlorochromatii (strain CaD3).